Consider the following 132-residue polypeptide: Large ribosomal subunit protein bL17 (132 aa).

The protein belongs to the bacterial ribosomal protein bL17 family. Part of the 50S ribosomal subunit. Contacts protein L32.

The chain is Large ribosomal subunit protein bL17 from Ehrlichia canis (strain Jake).